A 125-amino-acid chain; its full sequence is uncharacterized protein (125 aa).

The tract at residues 1–21 is disordered; it reads MLFYHCSSFSSSSSSSSSSAS. Low complexity predominate over residues 7-21; it reads SSFSSSSSSSSSSAS.

This is an uncharacterized protein from Saccharomyces cerevisiae (strain ATCC 204508 / S288c) (Baker's yeast).